The following is a 205-amino-acid chain: G-protein coupled receptor (205 aa).

The next 5 helical transmembrane spans lie at 40–60 (GITL…MILY), 71–91 (FYVI…FFMT), 107–127 (LVYF…AIIA), 151–171 (IGIL…FVQI), and 185–205 (LSSP…SFIW). Cys105 and Cys181 form a disulfide bridge.

It belongs to the G-protein coupled receptor 1 family.

The protein resides in the host membrane. This chain is G-protein coupled receptor (U12), found in Human herpesvirus 6B (strain Z29) (HHV-6 variant B).